Consider the following 77-residue polypeptide: Large ribosomal subunit protein eL20 (77 aa).

The protein belongs to the eukaryotic ribosomal protein eL20 family. As to quaternary structure, part of the 50S ribosomal subunit. Binds 23S rRNA.

The chain is Large ribosomal subunit protein eL20 from Pyrococcus abyssi (strain GE5 / Orsay).